Here is a 792-residue protein sequence, read N- to C-terminus: Phenylalanine--tRNA ligase beta subunit (792 aa).

In terms of domain architecture, tRNA-binding spans 39–147; it reads GESLGQVVVA…DDAPVGQALA (109 aa). The B5 domain occupies 400–475; that stretch reads PQPARIRLRR…RIHGYDRVPT (76 aa). Residues Asp453, Asp459, Glu462, and Glu463 each contribute to the Mg(2+) site. The FDX-ACB domain maps to 698-791; that stretch reads SRFPSVRRDL…IEREHRARIR (94 aa).

Belongs to the phenylalanyl-tRNA synthetase beta subunit family. Type 1 subfamily. As to quaternary structure, tetramer of two alpha and two beta subunits. Mg(2+) serves as cofactor.

The protein localises to the cytoplasm. The enzyme catalyses tRNA(Phe) + L-phenylalanine + ATP = L-phenylalanyl-tRNA(Phe) + AMP + diphosphate + H(+). The sequence is that of Phenylalanine--tRNA ligase beta subunit from Xanthomonas euvesicatoria pv. vesicatoria (strain 85-10) (Xanthomonas campestris pv. vesicatoria).